A 174-amino-acid polypeptide reads, in one-letter code: Photosystem I assembly protein Ycf4 (174 aa).

2 consecutive transmembrane segments (helical) span residues L11–G31 and I56–I76.

It belongs to the Ycf4 family.

It localises to the plastid. The protein resides in the chloroplast thylakoid membrane. Its function is as follows. Seems to be required for the assembly of the photosystem I complex. The chain is Photosystem I assembly protein Ycf4 from Emiliania huxleyi (Coccolithophore).